The following is a 457-amino-acid chain: Dynein regulatory complex protein 10 (457 aa).

Coiled coils occupy residues 101–127 (EKAS…DQER), 209–258 (IQDI…LHQV), and 292–381 (QQDI…AESE). The IQ domain occupies 397 to 426 (MVRAATLIQAMWKGYLVRSMLRSRKKKRVK). Positions 419–457 (SRKKKRVKSKGKDKGKGKEKPKEEKGKEKKAKGKGKGKK) are disordered. A compositionally biased stretch (basic and acidic residues) spans 428 to 445 (KGKDKGKGKEKPKEEKGK). Over residues 446–457 (EKKAKGKGKGKK) the composition is skewed to basic residues.

The protein belongs to the DRC10 family. As to quaternary structure, component of the nexin-dynein regulatory complex (N-DRC). Interacts with CFAP52.

The protein resides in the cytoplasm. It is found in the cytoskeleton. Its subcellular location is the flagellum axoneme. Functionally, component of the nexin-dynein regulatory complex (N-DRC), a key regulator of ciliary/flagellar motility which maintains the alignment and integrity of the distal axoneme and regulates microtubule sliding in motile axonemes. This chain is Dynein regulatory complex protein 10 (Iqcd), found in Rattus norvegicus (Rat).